Here is a 229-residue protein sequence, read N- to C-terminus: Ribonuclease 3 (229 aa).

An RNase III domain is found at 2–130 (FEKLQDVLCY…ILGAIFLDGG (129 aa)). Glu43 provides a ligand contact to Mg(2+). Residue Asp47 is part of the active site. The Mg(2+) site is built by Asp116 and Glu119. Glu119 is a catalytic residue. The DRBM domain maps to 157 to 226 (DAKSTLQELT…AGLALELLEG (70 aa)).

It belongs to the ribonuclease III family. Homodimer. Mg(2+) serves as cofactor.

Its subcellular location is the cytoplasm. The catalysed reaction is Endonucleolytic cleavage to 5'-phosphomonoester.. Functionally, digests double-stranded RNA. Involved in the processing of primary rRNA transcript to yield the immediate precursors to the large and small rRNAs (23S and 16S). Processes some mRNAs, and tRNAs when they are encoded in the rRNA operon. Processes pre-crRNA and tracrRNA of type II CRISPR loci if present in the organism. The protein is Ribonuclease 3 of Oleidesulfovibrio alaskensis (strain ATCC BAA-1058 / DSM 17464 / G20) (Desulfovibrio alaskensis).